Consider the following 300-residue polypeptide: Cation-efflux pump FieF (300 aa).

Helical transmembrane passes span 12-32, 39-59, 82-102, and 114-134; these read AAIAATAMASLLLLIKIFAWW, ILAALVDSLVDIGASLTNLLV, AALAQSMFISGSALFLFLTGI, and PGVGVIVTIVALICTIILVSF. Zn(2+) contacts are provided by D45 and D49. H153 and D157 together coordinate Zn(2+). A run of 2 helical transmembrane segments spans residues 156–176 and 178–198; these read SDVMMNGAILLALGLSWYGWH and ADALFALGIGIYILYSALRMG.

Belongs to the cation diffusion facilitator (CDF) transporter (TC 2.A.4) family. FieF subfamily. Homodimer.

It is found in the cell inner membrane. It catalyses the reaction Zn(2+)(in) + H(+)(out) = Zn(2+)(out) + H(+)(in). The catalysed reaction is Cd(2+)(in) + H(+)(out) = Cd(2+)(out) + H(+)(in). The enzyme catalyses Fe(2+)(in) + H(+)(out) = Fe(2+)(out) + H(+)(in). Its function is as follows. Divalent metal cation transporter which exports Zn(2+), Cd(2+) and possibly Fe(2+). May be involved in zinc and iron detoxification by efflux. The chain is Cation-efflux pump FieF from Escherichia coli O7:K1 (strain IAI39 / ExPEC).